The following is a 92-amino-acid chain: Large ribosomal subunit protein eL42 (92 aa).

The Zn(2+) site is built by cysteine 11, cysteine 14, cysteine 70, and cysteine 73. A C4-type zinc finger spans residues 11–73; that stretch reads CPNCRKHTVH…LDLRLKCKEC (63 aa).

It belongs to the eukaryotic ribosomal protein eL42 family. In terms of assembly, part of the 50S ribosomal subunit. It depends on Zn(2+) as a cofactor.

Functionally, binds to the 23S rRNA. The polypeptide is Large ribosomal subunit protein eL42 (Methanothermobacter thermautotrophicus (strain ATCC 29096 / DSM 1053 / JCM 10044 / NBRC 100330 / Delta H) (Methanobacterium thermoautotrophicum)).